A 494-amino-acid polypeptide reads, in one-letter code: Arp2/3 complex-activating protein rickA (494 aa).

The disordered stretch occupies residues 312-494 (PLENNIPPPP…RNSQKPSFVR (183 aa)). A compositionally biased stretch (pro residues) spans 317–357 (IPPPPPPPPPLPDNNIPPPPPPPPPLPDNNIPPPPPPPPMA). In terms of domain architecture, WH2 spans 383-400 (DTSDLMREIAGPKKLKKV). The central and acidic domains stretch occupies residues 421–454 (VNKPSGLESIFARRVAIEMSDSSSSESDSGNWSD). Low complexity predominate over residues 440 to 456 (SDSSSSESDSGNWSDVS). Residues 477–494 (THAQKINNRNSQKPSFVR) show a composition bias toward polar residues.

It localises to the cell surface. Recruits and activates the Arp2/3 complex, which in turn leads to actin polymerization, promoting Rickettsia motility during infection. This chain is Arp2/3 complex-activating protein rickA (rickA), found in Rickettsia rickettsii.